The primary structure comprises 142 residues: Large ribosomal subunit protein bL17 (142 aa).

It belongs to the bacterial ribosomal protein bL17 family. As to quaternary structure, part of the 50S ribosomal subunit. Contacts protein L32.

This chain is Large ribosomal subunit protein bL17, found in Wolbachia pipientis subsp. Culex pipiens (strain wPip).